A 117-amino-acid polypeptide reads, in one-letter code: UPF0122 protein Cthe_0771 (117 aa).

The protein belongs to the UPF0122 family.

In terms of biological role, might take part in the signal recognition particle (SRP) pathway. This is inferred from the conservation of its genetic proximity to ftsY/ffh. May be a regulatory protein. The protein is UPF0122 protein Cthe_0771 of Acetivibrio thermocellus (strain ATCC 27405 / DSM 1237 / JCM 9322 / NBRC 103400 / NCIMB 10682 / NRRL B-4536 / VPI 7372) (Clostridium thermocellum).